A 356-amino-acid chain; its full sequence is MKVQQYRLDELAHLVKGELIGEGSLQFSNLASLENAEVNHLTFVNGEKHLDQAKVSRAGAYIVTAALKEHLPEKDNFIIVDNPYLAFAILTHVFDKKISSTGIESTAQIHPSAVISKTAYIGHYVVIGENCVVGDNTVIQSHTKLDDNVEVGKDCFIDSHVTITGGSKLRDRVRIHSSTVIGGEGFGFAPYQGKWHRIAQLGSVLIGNDVRIGSNCSIDRGALDNTILEDGVIIDNLVQIAHNVHIGSNTAIAAKCGIAGSTKIGKNCILAGACGVAGHLSIADNVTLTGMSMVTKNISEAGTYSSGTGLFENNHWKKTIVRLRQLADVPLTQITKRLDHIQAQIESLESTFNLRK.

The active-site Proton acceptor is histidine 242.

Belongs to the transferase hexapeptide repeat family. LpxD subfamily. As to quaternary structure, homotrimer.

The catalysed reaction is a UDP-3-O-[(3R)-3-hydroxyacyl]-alpha-D-glucosamine + a (3R)-hydroxyacyl-[ACP] = a UDP-2-N,3-O-bis[(3R)-3-hydroxyacyl]-alpha-D-glucosamine + holo-[ACP] + H(+). The protein operates within bacterial outer membrane biogenesis; LPS lipid A biosynthesis. In terms of biological role, catalyzes the N-acylation of UDP-3-O-acylglucosamine using 3-hydroxyacyl-ACP as the acyl donor. Is involved in the biosynthesis of lipid A, a phosphorylated glycolipid that anchors the lipopolysaccharide to the outer membrane of the cell. The polypeptide is UDP-3-O-acylglucosamine N-acyltransferase (Acinetobacter baumannii (strain ACICU)).